The sequence spans 439 residues: S-layer protein (439 aa).

The N-terminal stretch at Met-1–Ala-30 is a signal peptide.

Glycosylated.

The protein resides in the secreted. The protein localises to the cell wall. Its subcellular location is the S-layer. Functionally, the S-layer is a paracrystalline mono-layered assembly of proteins which coat the surface of bacteria. The sequence is that of S-layer protein (slpH) from Lactobacillus helveticus (Lactobacillus suntoryeus).